Consider the following 373-residue polypeptide: MLPQVILNHLGSIGEAASTWFSENKYFGSVGQCPPLPKGDLNYDIYMGYPEMFAWDKKRCVAYVSNLYNATVSTWDPYKSVVLDTIHFPGLSHAGNSASPNPLHASGIILRPDAYHAETLEVVIDNGDAFYSDGFNVSGPDHLMSIDLKTKEVTSQLRLNNGLYAGYADASLGPDGNTYVLGTYSSNILRVTPDKEISTFYVAEPLGPPRLYGFTGIAHVGDAMIVPDNIIGQLIRFDVRDKVGTPVTIKQTPYHEFKTANVLHFPERYNDTILLVAENMTPDYPYGGVSVYQDKTKQFNEVEFLGFLPSRLTNALTTSARQMADRIYVVALPTDGANITVAGESSRFPFQDITEELDLMILPEIKDEARDEI.

Belongs to the TRI14 family.

Functionally, part of the core gene cluster that mediates the biosynthesis of trichothecenes, a very large family of chemically related bicyclic sesquiterpene compounds acting as mycotoxins, including T2-toxin. The biosynthesis of trichothecenes begins with the cyclization of farnesyl diphosphate to trichodiene and is catalyzed by the trichodiene synthase TRI5. Trichodiene undergoes a series of oxygenations catalyzed by the cytochrome P450 monooxygenase TRI4. TRI4 controls the addition of four oxygens at C-2, C-3, C-11, and the C-12, C-13-epoxide to form the intermediate isotrichotriol. Isotrichotriol then undergoes a non-enzymatic isomerization and cyclization to form isotrichodermol. During this process, the oxygen at the C-2 position becomes the pyran ring oxygen and the hydroxyl group at C-11 is lost. More complex type A trichothecenes are built by modifying isotrichodermol through a series of paired hydroxylation and acetylation or acylation steps. Isotrichodermol is converted to isotrichodermin by the acetyltransferase TRI101. TRI101 encodes a C-3 transacetylase that acts as a self-protection or resistance factor during biosynthesis and that the presence of a free C-3 hydroxyl group is a key component of Fusarium trichothecene phytotoxicity. A second hydroxyl group is added to C-15 by the trichothecene C-15 hydroxylase TRI11, producing 15-decalonectrin, which is then acetylated by TRI3, producing calonectrin. A third hydroxyl group is added at C-4 by the cytochrome P450 monooxygenase TRI13, converting calonectrin to 3,15-diacetoxyspirpenol, which is subsequently acetylated bythe acetyltransferase TRI7. A fourth hydroxyl group is added to C-8 by the cytochrome P450 monooxygenase TRI1, followed by the addition of an isovaleryl moiety by TRI16. Finally, the acetyl group is removed from the C-3 position by the trichothecene C-3 esterase TRI8 to produce T-2 toxin. The sequence is that of Core trichothecene cluster (CTC) protein 14 from Fusarium sporotrichioides.